We begin with the raw amino-acid sequence, 425 residues long: Serine--tRNA ligase (425 aa).

228 to 230 (TAE) contributes to the L-serine binding site. Position 259-261 (259-261 (RSE)) interacts with ATP. E282 serves as a coordination point for L-serine. 346–349 (EIAS) is a binding site for ATP. L-serine is bound at residue S382.

It belongs to the class-II aminoacyl-tRNA synthetase family. Type-1 seryl-tRNA synthetase subfamily. Homodimer. The tRNA molecule binds across the dimer.

Its subcellular location is the cytoplasm. It carries out the reaction tRNA(Ser) + L-serine + ATP = L-seryl-tRNA(Ser) + AMP + diphosphate + H(+). It catalyses the reaction tRNA(Sec) + L-serine + ATP = L-seryl-tRNA(Sec) + AMP + diphosphate + H(+). Its pathway is aminoacyl-tRNA biosynthesis; selenocysteinyl-tRNA(Sec) biosynthesis; L-seryl-tRNA(Sec) from L-serine and tRNA(Sec): step 1/1. Its function is as follows. Catalyzes the attachment of serine to tRNA(Ser). Is also able to aminoacylate tRNA(Sec) with serine, to form the misacylated tRNA L-seryl-tRNA(Sec), which will be further converted into selenocysteinyl-tRNA(Sec). The polypeptide is Serine--tRNA ligase (Rickettsia canadensis (strain McKiel)).